A 364-amino-acid polypeptide reads, in one-letter code: Heme A synthase (364 aa).

The next 8 helical transmembrane spans lie at Ala25 to Gly45, Phe111 to Gly131, Trp139 to Val159, Leu174 to Gly194, Ala212 to Leu232, Val270 to Val290, Ser305 to Leu325, and Val327 to Val347. His274 lines the heme pocket. His335 is a binding site for heme.

It belongs to the COX15/CtaA family. Type 2 subfamily. As to quaternary structure, interacts with CtaB. The cofactor is heme b.

The protein resides in the cell membrane. The enzyme catalyses Fe(II)-heme o + 2 A + H2O = Fe(II)-heme a + 2 AH2. It functions in the pathway porphyrin-containing compound metabolism; heme A biosynthesis; heme A from heme O: step 1/1. Its function is as follows. Catalyzes the conversion of heme O to heme A by two successive hydroxylations of the methyl group at C8. The first hydroxylation forms heme I, the second hydroxylation results in an unstable dihydroxymethyl group, which spontaneously dehydrates, resulting in the formyl group of heme A. The chain is Heme A synthase from Allorhizobium ampelinum (strain ATCC BAA-846 / DSM 112012 / S4) (Agrobacterium vitis (strain S4)).